A 350-amino-acid polypeptide reads, in one-letter code: Methionine import ATP-binding protein MetN 1 (350 aa).

The region spanning 12–251 (IDLKNITVLF…PSREVTQDFV (240 aa)) is the ABC transporter domain. Position 48-55 (48-55 (GYSGAGKS)) interacts with ATP.

It belongs to the ABC transporter superfamily. Methionine importer (TC 3.A.1.24) family. In terms of assembly, the complex is composed of two ATP-binding proteins (MetN), two transmembrane proteins (MetI) and a solute-binding protein (MetQ).

The protein resides in the cell membrane. It carries out the reaction L-methionine(out) + ATP + H2O = L-methionine(in) + ADP + phosphate + H(+). It catalyses the reaction D-methionine(out) + ATP + H2O = D-methionine(in) + ADP + phosphate + H(+). Its function is as follows. Part of the ABC transporter complex MetNIQ involved in methionine import. Responsible for energy coupling to the transport system. This chain is Methionine import ATP-binding protein MetN 1, found in Oenococcus oeni (strain ATCC BAA-331 / PSU-1).